A 202-amino-acid chain; its full sequence is MTLIALILPAYLLGSISFGVLASRFFQLPDPRTYGSGNPGATNVLRSGKKSAAIFTLLGDGGKGWLAVALAEYSAPLLELGNEAVAAAALGVFLGHLFPVFLHFKGGKGVATALGILLGFNPWMGLLAATIWLAVALMWRFSSLAAIVAASLAPFYALFFLGFEARTLVVFIMSLLLIWRHKSNIAGLIAGSESRIGKRSTS.

A run of 4 helical transmembrane segments spans residues 1 to 21, 84 to 104, 116 to 136, and 143 to 163; these read MTLIALILPAYLLGSISFGVL, AVAAAALGVFLGHLFPVFLHF, ILLGFNPWMGLLAATIWLAVA, and SLAAIVAASLAPFYALFFLGF.

It belongs to the PlsY family. In terms of assembly, probably interacts with PlsX.

Its subcellular location is the cell inner membrane. The enzyme catalyses an acyl phosphate + sn-glycerol 3-phosphate = a 1-acyl-sn-glycero-3-phosphate + phosphate. Its pathway is lipid metabolism; phospholipid metabolism. Its function is as follows. Catalyzes the transfer of an acyl group from acyl-phosphate (acyl-PO(4)) to glycerol-3-phosphate (G3P) to form lysophosphatidic acid (LPA). This enzyme utilizes acyl-phosphate as fatty acyl donor, but not acyl-CoA or acyl-ACP. In Nitrosospira multiformis (strain ATCC 25196 / NCIMB 11849 / C 71), this protein is Glycerol-3-phosphate acyltransferase.